The sequence spans 216 residues: Large ribosomal subunit protein uL4 (216 aa).

Positions 47 to 77 are disordered; sequence THKVKGMGEVSGTTKKPYRQKGTGNARQGSL.

It belongs to the universal ribosomal protein uL4 family. As to quaternary structure, part of the 50S ribosomal subunit.

Functionally, one of the primary rRNA binding proteins, this protein initially binds near the 5'-end of the 23S rRNA. It is important during the early stages of 50S assembly. It makes multiple contacts with different domains of the 23S rRNA in the assembled 50S subunit and ribosome. Forms part of the polypeptide exit tunnel. This chain is Large ribosomal subunit protein uL4, found in Acidiphilium cryptum (strain JF-5).